The following is a 92-amino-acid chain: uncharacterized protein (92 aa).

This sequence belongs to the IUNH family.

This is an uncharacterized protein from Corynebacterium ammoniagenes (Brevibacterium ammoniagenes).